The primary structure comprises 282 residues: Nucleotide-binding protein ABO_0549 (282 aa).

Residue 8–15 (GRSGSGKT) participates in ATP binding. Residue 59–62 (DARN) participates in GTP binding.

It belongs to the RapZ-like family.

Functionally, displays ATPase and GTPase activities. In Alcanivorax borkumensis (strain ATCC 700651 / DSM 11573 / NCIMB 13689 / SK2), this protein is Nucleotide-binding protein ABO_0549.